The primary structure comprises 102 residues: NADH-quinone oxidoreductase subunit K (102 aa).

3 helical membrane-spanning segments follow: residues Leu-5–Leu-25, Ile-31–Phe-51, and Val-62–Leu-82.

The protein belongs to the complex I subunit 4L family. In terms of assembly, NDH-1 is composed of 14 different subunits. Subunits NuoA, H, J, K, L, M, N constitute the membrane sector of the complex.

Its subcellular location is the cell inner membrane. The catalysed reaction is a quinone + NADH + 5 H(+)(in) = a quinol + NAD(+) + 4 H(+)(out). NDH-1 shuttles electrons from NADH, via FMN and iron-sulfur (Fe-S) centers, to quinones in the respiratory chain. The immediate electron acceptor for the enzyme in this species is believed to be ubiquinone. Couples the redox reaction to proton translocation (for every two electrons transferred, four hydrogen ions are translocated across the cytoplasmic membrane), and thus conserves the redox energy in a proton gradient. The chain is NADH-quinone oxidoreductase subunit K from Paracidovorax citrulli (strain AAC00-1) (Acidovorax citrulli).